Consider the following 514-residue polypeptide: MGKDFRYYFQHPWSRMIVAYLVIFFNFLIFAEDPVSHSQTEANVIVVGNCFSFVTNKYPRGVGWRILKVLLWLLAILIGLIAGKFLFHQRLFGQLLRLKMFREDHGSWMTMFFSTILFLFIFSHIYNTILLMDGNMGAYLITDYMGIRNESFMKLAAVGTWMGDFVTAWMVTDMMLQDKPYPDWGKSARAFWKKGNVRIILFWTVLFTLTSVVVLVITTDWISWDKLNRGFLPSDEVSRAFLASFILVFDLLIVMQDWEFPHFMGDVDVNLPGLHTPHMQFKIPFFQKIFKEEYRIHITGKWFNYGIIFLVLILDLNMWKNQIFYKPHEYGQYIGPGQKIYTVKDSESLKDLNRTKLSWEWRSNHTNPQTNKTYVEGDMFLHSRFIGASLDVKCLAFVPSLIAFVWFGFFIWFFGRFLKNEQGMENQDKTYTRMKRKSPSEHSKDMGITRENTQVSVEDPLNDPALVCIRSDFNEIVYKSSHLTSENLSLHLKESTSEVEAEQEPAASQRMRTN.

The Cytoplasmic segment spans residues 1 to 15; that stretch reads MGKDFRYYFQHPWSR. The helical transmembrane segment at 16–36 threads the bilayer; that stretch reads MIVAYLVIFFNFLIFAEDPVS. The Extracellular segment spans residues 37–65; it reads HSQTEANVIVVGNCFSFVTNKYPRGVGWR. A helical transmembrane segment spans residues 66-86; the sequence is ILKVLLWLLAILIGLIAGKFL. The Cytoplasmic portion of the chain corresponds to 87–110; the sequence is FHQRLFGQLLRLKMFREDHGSWMT. A helical transmembrane segment spans residues 111–131; it reads MFFSTILFLFIFSHIYNTILL. The Extracellular portion of the chain corresponds to 132–154; it reads MDGNMGAYLITDYMGIRNESFMK. A helical transmembrane segment spans residues 155 to 175; sequence LAAVGTWMGDFVTAWMVTDMM. The Cytoplasmic portion of the chain corresponds to 176 to 198; that stretch reads LQDKPYPDWGKSARAFWKKGNVR. The chain crosses the membrane as a helical span at residues 199–219; the sequence is IILFWTVLFTLTSVVVLVITT. The Extracellular segment spans residues 220 to 239; the sequence is DWISWDKLNRGFLPSDEVSR. The helical transmembrane segment at 240–260 threads the bilayer; it reads AFLASFILVFDLLIVMQDWEF. At 261-295 the chain is on the cytoplasmic side; that stretch reads PHFMGDVDVNLPGLHTPHMQFKIPFFQKIFKEEYR. The helical transmembrane segment at 296–316 threads the bilayer; it reads IHITGKWFNYGIIFLVLILDL. Residues 317-394 lie on the Extracellular side of the membrane; sequence NMWKNQIFYK…FIGASLDVKC (78 aa). 2 N-linked (GlcNAc...) asparagine glycosylation sites follow: N353 and N371. A helical transmembrane segment spans residues 395–415; it reads LAFVPSLIAFVWFGFFIWFFG. The Cytoplasmic portion of the chain corresponds to 416 to 514; that stretch reads RFLKNEQGME…PAASQRMRTN (99 aa). Residues 430-450 are disordered; the sequence is TYTRMKRKSPSEHSKDMGITR. Over residues 438 to 448 the composition is skewed to basic and acidic residues; it reads SPSEHSKDMGI. A Phosphothreonine modification is found at T453. Positions 494–514 are disordered; the sequence is ESTSEVEAEQEPAASQRMRTN.

It belongs to the TMEM117 family.

It is found in the cell membrane. Its function is as follows. Involved in endoplasmic reticulum (ER) stress-induced cell death pathway. The protein is Transmembrane protein 117 (Tmem117) of Mus musculus (Mouse).